A 978-amino-acid chain; its full sequence is Peroxisomal ATPase PEX6 (978 aa).

R119 is subject to Omega-N-methylarginine. ATP is bound by residues G470–T477 and G742–T749.

It belongs to the AAA ATPase family. As to quaternary structure, interacts with PEX1; forming the PEX1-PEX6 AAA ATPase complex, which is composed of a heterohexamer formed by a trimer of PEX1-PEX6 dimers. Interacts with PEX26; interaction is direct and promotes recruitment to peroxisomal membranes. Interacts with ZFAND6.

Its subcellular location is the cytoplasm. The protein localises to the cytosol. It is found in the peroxisome membrane. The protein resides in the cell projection. It localises to the cilium. Its subcellular location is the photoreceptor outer segment. It catalyses the reaction ATP + H2O = ADP + phosphate + H(+). Component of the PEX1-PEX6 AAA ATPase complex, a protein dislocase complex that mediates the ATP-dependent extraction of the PEX5 receptor from peroxisomal membranes, an essential step for PEX5 recycling. Specifically recognizes PEX5 monoubiquitinated at 'Cys-11', and pulls it out of the peroxisome lumen through the PEX2-PEX10-PEX12 retrotranslocation channel. Extraction by the PEX1-PEX6 AAA ATPase complex is accompanied by unfolding of the TPR repeats and release of bound cargo from PEX5. This Rattus norvegicus (Rat) protein is Peroxisomal ATPase PEX6.